We begin with the raw amino-acid sequence, 460 residues long: Argininosuccinate lyase (460 aa).

This sequence belongs to the lyase 1 family. Argininosuccinate lyase subfamily.

It localises to the cytoplasm. It catalyses the reaction 2-(N(omega)-L-arginino)succinate = fumarate + L-arginine. The protein operates within amino-acid biosynthesis; L-arginine biosynthesis; L-arginine from L-ornithine and carbamoyl phosphate: step 3/3. This chain is Argininosuccinate lyase, found in Parvibaculum lavamentivorans (strain DS-1 / DSM 13023 / NCIMB 13966).